Consider the following 167-residue polypeptide: NAD(P)H-quinone oxidoreductase subunit I, chloroplastic (167 aa).

4Fe-4S ferredoxin-type domains lie at 55 to 84 (GRIH…VDWK) and 95 to 124 (LNYS…MTEE). Positions 64, 67, 70, 74, 104, 107, 110, and 114 each coordinate [4Fe-4S] cluster.

It belongs to the complex I 23 kDa subunit family. As to quaternary structure, NDH is composed of at least 16 different subunits, 5 of which are encoded in the nucleus. Requires [4Fe-4S] cluster as cofactor.

It localises to the plastid. The protein localises to the chloroplast thylakoid membrane. The enzyme catalyses a plastoquinone + NADH + (n+1) H(+)(in) = a plastoquinol + NAD(+) + n H(+)(out). It carries out the reaction a plastoquinone + NADPH + (n+1) H(+)(in) = a plastoquinol + NADP(+) + n H(+)(out). NDH shuttles electrons from NAD(P)H:plastoquinone, via FMN and iron-sulfur (Fe-S) centers, to quinones in the photosynthetic chain and possibly in a chloroplast respiratory chain. The immediate electron acceptor for the enzyme in this species is believed to be plastoquinone. Couples the redox reaction to proton translocation, and thus conserves the redox energy in a proton gradient. This chain is NAD(P)H-quinone oxidoreductase subunit I, chloroplastic, found in Atropa belladonna (Belladonna).